The primary structure comprises 136 residues: Succinate dehydrogenase 2 membrane subunit SdhC (136 aa).

3 consecutive transmembrane segments (helical) span residues 32 to 52, 70 to 90, and 109 to 129; these read RISG…AAML, IVGL…LNGI, and LWII…VVGI. His-85 is a binding site for heme.

Belongs to the cytochrome b560 family. Part of an enzyme complex containing four subunits: a flavoprotein (SdhA), an iron-sulfur protein (SdhB), plus two membrane-anchoring proteins (SdhC and SdhD). Heme is required as a cofactor.

The protein localises to the cell membrane. Membrane-anchoring subunit of succinate dehydrogenase 2 (Sdh2). Sdh2 may catalyze the two-electron oxidation of succinate to fumarate with a corresponding reduction of quinone to quinol under low oxygen conditions, when the primary aerobic succinate dehydrogenase (Sdh1) is inhibited. Sdh2 seems to be the generator of the proton motive force (PMF) under hypoxia. This Mycobacterium tuberculosis (strain ATCC 25618 / H37Rv) protein is Succinate dehydrogenase 2 membrane subunit SdhC.